A 477-amino-acid chain; its full sequence is Ketoisovalerate oxidoreductase subunit VorA (477 aa).

Heterotrimer of the VorA, VorB and VorC subunits.

It carries out the reaction 3-methyl-2-oxobutanoate + 2 oxidized [2Fe-2S]-[ferredoxin] + CoA = 2-methylpropanoyl-CoA + 2 reduced [2Fe-2S]-[ferredoxin] + CO2 + H(+). In Methanothermobacter thermautotrophicus (strain ATCC 29096 / DSM 1053 / JCM 10044 / NBRC 100330 / Delta H) (Methanobacterium thermoautotrophicum), this protein is Ketoisovalerate oxidoreductase subunit VorA (vorA).